A 549-amino-acid chain; its full sequence is MDILRRTTSVELTRLPVSAADTLSDVVFPWQSLCFRLAMVFNNEGGKYDKDGRALMVAVGESNFVLMWRKLFNALCIAPVVVDGSDTQHKLNAESGSLHTSTSSSWCTYDPTRTGTLGKIAGKLFVVTAKCVCEGATLETTAPTSGEVEESGQGKETPIPRRIECVYDFHYTLPDFDIWGNDVTIGFLVMSHYSGNGNVDFVRSLDPTAARVKNLFKSPTVVLGTCHYRAVASRLLRCTSVARQISSTSVMICVNVANVAHVPVRVQEVSFDIYSTQMGEGDNDIGGVQLTHEQRFGPCGTDLKAIKLLQRTVTVTPLLLHGRCLEETLQPGESACFQFAIEVQPHLCHLLETHPRQEPHSRYANNTASVAVEAKNAPYSMRNDVSPILPHSPVAPQTVWRPSPIGTVECVPCSELKQVLFSKFVSQAYVSYNPIVSAGGESTDQRVASPLVSLSGTRCPGPCSRRGWPRSGKRRRGNTCSQLKLSPATCLHILRVCVCVCVCVFAFDGSKGAGQFYCVIGSLFFFRSFSLFLCPLLTVCLLRAKIFNI.

This is Protein X92 from Trypanosoma brucei brucei.